We begin with the raw amino-acid sequence, 281 residues long: Probable endonuclease 4 (281 aa).

The Zn(2+) site is built by histidine 69, histidine 109, glutamate 145, aspartate 179, histidine 182, histidine 216, aspartate 229, histidine 231, and glutamate 261.

This sequence belongs to the AP endonuclease 2 family. It depends on Zn(2+) as a cofactor.

It carries out the reaction Endonucleolytic cleavage to 5'-phosphooligonucleotide end-products.. Endonuclease IV plays a role in DNA repair. It cleaves phosphodiester bonds at apurinic or apyrimidinic (AP) sites, generating a 3'-hydroxyl group and a 5'-terminal sugar phosphate. The protein is Probable endonuclease 4 of Pectobacterium atrosepticum (strain SCRI 1043 / ATCC BAA-672) (Erwinia carotovora subsp. atroseptica).